The primary structure comprises 120 residues: MKLTKNESRMRRKIRIRKKVSGNGARPRLVVYRSNLHIYAQLVDDQTGTTLAATSTLALGKQNGNALRLTVDNASLVGKEIAKLAKEKNIERVVFDRNGYIYHGRIKAVADGAREAGLEF.

It belongs to the universal ribosomal protein uL18 family. Part of the 50S ribosomal subunit; part of the 5S rRNA/L5/L18/L25 subcomplex. Contacts the 5S and 23S rRNAs.

In terms of biological role, this is one of the proteins that bind and probably mediate the attachment of the 5S RNA into the large ribosomal subunit, where it forms part of the central protuberance. The polypeptide is Large ribosomal subunit protein uL18 (Oleidesulfovibrio alaskensis (strain ATCC BAA-1058 / DSM 17464 / G20) (Desulfovibrio alaskensis)).